Reading from the N-terminus, the 229-residue chain is Urease accessory protein UreF (229 aa).

It belongs to the UreF family. As to quaternary structure, ureD, UreF and UreG form a complex that acts as a GTP-hydrolysis-dependent molecular chaperone, activating the urease apoprotein by helping to assemble the nickel containing metallocenter of UreC. The UreE protein probably delivers the nickel.

The protein resides in the cytoplasm. In terms of biological role, required for maturation of urease via the functional incorporation of the urease nickel metallocenter. The sequence is that of Urease accessory protein UreF from Methylobacterium radiotolerans (strain ATCC 27329 / DSM 1819 / JCM 2831 / NBRC 15690 / NCIMB 10815 / 0-1).